Consider the following 241-residue polypeptide: Nuclear receptor-interacting protein 3 (241 aa).

The chain is Nuclear receptor-interacting protein 3 (NRIP3) from Homo sapiens (Human).